Here is a 214-residue protein sequence, read N- to C-terminus: Phosphoenolpyruvate guanylyltransferase (214 aa).

Threonine 148, glycine 163, and serine 166 together coordinate phosphoenolpyruvate.

The protein belongs to the CofC family.

It carries out the reaction phosphoenolpyruvate + GTP + H(+) = enolpyruvoyl-2-diphospho-5'-guanosine + diphosphate. Its pathway is cofactor biosynthesis; coenzyme F420 biosynthesis. Guanylyltransferase that catalyzes the activation of phosphoenolpyruvate (PEP) as enolpyruvoyl-2-diphospho-5'-guanosine, via the condensation of PEP with GTP. It is involved in the biosynthesis of coenzyme F420, a hydride carrier cofactor. This is Phosphoenolpyruvate guanylyltransferase from Mycobacterium tuberculosis (strain KZN 1435 / MDR).